A 477-amino-acid polypeptide reads, in one-letter code: MSESRQKLHPLLVHVARSFGHFLVPRKPSCLLVAVSGGADSLALLYAAHELAPDFGVCACAVTVDHSLRAQEGALDARFVRALCARFSPPLPCFVQQISAGAVHACAKIRGRGVQDAARALRYKVFDHVAARCGAQVVLTAHTRDDQYETLLMRLFQGAAASALQGIRAARGRYVRPLLKVSRTCVEDFLQTRGVRWREDASNTCRKYVRNRIRHELIPALDAVLAGWRSGLDKTFAGISAEHSFCVAALTRWREGCSHAWEPVPRALGTRLRMPRSDFLAAEFILRFFLLQEACVRLGVSHRVPRGALERCARFDGVRRIHVSGLQLERAGAYVLFSCIHASDTARETKKQDAGSPPSSEKQGVSAIYVARPGAYPCACGTLLVEVRPAGVFVCCAQDHVGVGPFSFPFYIRTHRTGDTISIRGGHKGIRKMFSEWHVPLSDRTVLPMIEQDGVLRALYGAALGYQNRYAERTPHE.

Residue 36–41 (SGGADS) participates in ATP binding.

Belongs to the tRNA(Ile)-lysidine synthase family.

The protein resides in the cytoplasm. It catalyses the reaction cytidine(34) in tRNA(Ile2) + L-lysine + ATP = lysidine(34) in tRNA(Ile2) + AMP + diphosphate + H(+). Ligates lysine onto the cytidine present at position 34 of the AUA codon-specific tRNA(Ile) that contains the anticodon CAU, in an ATP-dependent manner. Cytidine is converted to lysidine, thus changing the amino acid specificity of the tRNA from methionine to isoleucine. This chain is tRNA(Ile)-lysidine synthase, found in Treponema pallidum (strain Nichols).